The chain runs to 481 residues: Uridine 5'-monophosphate synthase (481 aa).

The OPRTase stretch occupies residues 1-214 (MEVASQALGP…VFSAANHNGL (214 aa)). Tyrosine 37 is subject to Phosphotyrosine. Residues 215–220 (PPPEKK) are domain linker. Residues 221 to 481 (ACKELSFGAR…EAYLSRLAVQ (261 aa)) form an OMPdecase region. An orotidine 5'-phosphate-binding site is contributed by serine 257. Residues serine 257, aspartate 259, and 281–283 (KTH) each bind UMP. Orotidine 5'-phosphate-binding positions include lysine 281, lysine 314, aspartate 317, threonine 321, serine 372, 430 to 432 (QQY), and 450 to 451 (GR). Active-site for OMPdecase activity residues include lysine 314 and aspartate 317. UMP contacts are provided by residues aspartate 317, threonine 321, serine 372, 430-432 (QQY), and 450-451 (GR).

It in the N-terminal section; belongs to the purine/pyrimidine phosphoribosyltransferase family. In the C-terminal section; belongs to the OMP decarboxylase family. As to quaternary structure, homodimer; dimerization is required for enzymatic activity.

It catalyses the reaction orotidine 5'-phosphate + diphosphate = orotate + 5-phospho-alpha-D-ribose 1-diphosphate. The enzyme catalyses orotidine 5'-phosphate + H(+) = UMP + CO2. It participates in pyrimidine metabolism; UMP biosynthesis via de novo pathway; UMP from orotate: step 1/2. It functions in the pathway pyrimidine metabolism; UMP biosynthesis via de novo pathway; UMP from orotate: step 2/2. In terms of biological role, bifunctional enzyme catalyzing the last two steps of de novo pyrimidine biosynthesis, orotate phosphoribosyltransferase (OPRT), which converts orotate to orotidine-5'-monophosphate (OMP), and orotidine-5'-monophosphate decarboxylase (ODC), the terminal enzymatic reaction that decarboxylates OMP to uridine monophosphate (UMP). The protein is Uridine 5'-monophosphate synthase (Umps) of Mus musculus (Mouse).